The sequence spans 444 residues: Sonic hedgehog protein (444 aa).

The first 24 residues, 1–24 (MLVATQSLLLLSFICTLVTPPGLA), serve as a signal peptide directing secretion. The N-palmitoyl cysteine moiety is linked to residue C25. Residues 33–39 (KRRHPKK) carry the Cardin-Weintraub motif. Ca(2+) is bound by residues E90, E91, D96, T126, E127, D130, and D132. Zn(2+) is bound by residues H141, D148, and H183. G198 carries Cholesterol glycine ester lipidation. Repeat copies occupy residues 386–393 (QVDLQSHH), 394–401 (QVDLQSHH), and 403–409 (VDLQSHH). The tract at residues 386–409 (QVDLQSHHQVDLQSHHQVDLQSHH) is 3 X 8 AA tandem repeats of Q-V-D-L-Q-S-H-H.

It belongs to the hedgehog family. In terms of assembly, interacts with HHATL/GUP1 which negatively regulates HHAT-mediated palmitoylation of the SHH N-terminus. Interacts with BOC and CDON. Interacts with HHIP. Interacts with DISP1 via its cholesterol anchor. Interacts with SCUBE2. As to quaternary structure, multimer. Post-translationally, the C-terminal domain displays an autoproteolysis activity and a cholesterol transferase activity. Both activities result in the cleavage of the full-length protein and covalent attachment of a cholesterol moiety to the C-terminal of the newly generated N-terminal fragment (ShhN). Cholesterylation is required for the sonic hedgehog protein N-product targeting to lipid rafts and multimerization. ShhN is the active species in both local and long-range signaling, whereas the C-product (ShhC) is degraded in the reticulum endoplasmic. N-palmitoylation by HHAT of ShhN is required for sonic hedgehog protein N-product multimerization and full activity. It is a prerequisite for the membrane-proximal positioning and the subsequent shedding of this N-terminal peptide. In terms of processing, the lipidated N- and C-terminal peptides of ShhNp can be cleaved (shedding). The N-terminal palmitoylated peptide is cleaved at the Cardin-Weintraub (CW) motif site. The cleavage reduced the interactions with heparan sulfate. The cleavage is enhanced by SCUBE2. As to expression, strongly expressed in notochord and neural floor plate during embryogenesis. In tadpole, high expression is observed in pancreas/stomach, moderate expression in tail, and low expression in intestine, brain, and hind limb.

The protein localises to the endoplasmic reticulum membrane. It is found in the golgi apparatus membrane. Its subcellular location is the cell membrane. The enzyme catalyses glycyl-L-cysteinyl-[protein] + cholesterol + H(+) = [protein]-C-terminal glycyl cholesterol ester + N-terminal L-cysteinyl-[protein]. Its function is as follows. The C-terminal part of the sonic hedgehog protein precursor displays an autoproteolysis and a cholesterol transferase activity. Both activities result in the cleavage of the full-length protein into two parts (ShhN and ShhC) followed by the covalent attachment of a cholesterol moiety to the C-terminal of the newly generated ShhN. Both activities occur in the endoplasmic reticulum. Once cleaved, ShhC is degraded in the endoplasmic reticulum. Functionally, the dually lipidated sonic hedgehog protein N-product (ShhNp) is a morphogen which is essential for a variety of patterning events during development. Induces ventral cell fate in the neural tube and somites. Involved in the patterning of the anterior-posterior axis of the developing limb bud. Essential for axon guidance. Binds to the patched (PTCH1) receptor, which functions in association with smoothened (SMO), to activate the transcription of target genes. In the absence of SHH, PTCH1 represses the constitutive signaling activity of SMO. In Xenopus laevis (African clawed frog), this protein is Sonic hedgehog protein.